The primary structure comprises 384 residues: 1-deoxy-D-xylulose 5-phosphate reductoisomerase (384 aa).

Positions 10, 11, 12, 13, 37, and 124 each coordinate NADPH. Lys125 is a 1-deoxy-D-xylulose 5-phosphate binding site. Glu126 is an NADPH binding site. Asp150 contacts Mn(2+). Residues Ser151, Glu152, Ser176, and His199 each contribute to the 1-deoxy-D-xylulose 5-phosphate site. Glu152 serves as a coordination point for Mn(2+). An NADPH-binding site is contributed by Gly205. Residues Ser212, Asn217, Lys218, and Glu221 each coordinate 1-deoxy-D-xylulose 5-phosphate. Mn(2+) is bound at residue Glu221.

It belongs to the DXR family. Mg(2+) serves as cofactor. It depends on Mn(2+) as a cofactor.

It carries out the reaction 2-C-methyl-D-erythritol 4-phosphate + NADP(+) = 1-deoxy-D-xylulose 5-phosphate + NADPH + H(+). The protein operates within isoprenoid biosynthesis; isopentenyl diphosphate biosynthesis via DXP pathway; isopentenyl diphosphate from 1-deoxy-D-xylulose 5-phosphate: step 1/6. Its function is as follows. Catalyzes the NADPH-dependent rearrangement and reduction of 1-deoxy-D-xylulose-5-phosphate (DXP) to 2-C-methyl-D-erythritol 4-phosphate (MEP). The polypeptide is 1-deoxy-D-xylulose 5-phosphate reductoisomerase (Clostridium tetani (strain Massachusetts / E88)).